Consider the following 206-residue polypeptide: Uridine kinase (206 aa).

9 to 16 (GGSGSGKT) contributes to the ATP binding site.

Belongs to the uridine kinase family.

It localises to the cytoplasm. The catalysed reaction is uridine + ATP = UMP + ADP + H(+). It catalyses the reaction cytidine + ATP = CMP + ADP + H(+). It functions in the pathway pyrimidine metabolism; CTP biosynthesis via salvage pathway; CTP from cytidine: step 1/3. The protein operates within pyrimidine metabolism; UMP biosynthesis via salvage pathway; UMP from uridine: step 1/1. The protein is Uridine kinase of Borrelia garinii subsp. bavariensis (strain ATCC BAA-2496 / DSM 23469 / PBi) (Borreliella bavariensis).